A 54-amino-acid polypeptide reads, in one-letter code: Kazal-type inhibitor-like protein (54 aa).

Positions 1 to 54 (MKVNCKGYPTKFCFGKPLPHCASDGKTYPNRCRFCNAFVKSHGLITLRYYGKCK) constitute a Kazal-like domain. 3 disulfide bridges follow: Cys-5–Cys-35, Cys-13–Cys-32, and Cys-21–Cys-53.

As to quaternary structure, may form disulfide-linked dimers or trimers (in vitro). Expressed by the venom gland.

Its subcellular location is the secreted. Its function is as follows. Partially inhibits trypsin in vitro at slightly acidic pH and concentrations in excess of 0.3 mM. Has no protease inhibitory activity at neutral or basic pH. Has no antibacterial activity. Shows no toxicity in vertebrates apart from transient paw edema in mouse. The polypeptide is Kazal-type inhibitor-like protein (Bothriechis schlegelii (Eyelash palm pitviper)).